A 104-amino-acid chain; its full sequence is N(4)-acetylcytidine amidohydrolase (104 aa).

The 97-residue stretch at 6 to 102 folds into the ASCH domain; the sequence is ITFYQRFEAD…SEFWVIEIRL (97 aa). Lys-21 acts as the Proton acceptor in catalysis. The Nucleophile role is filled by Thr-24. Glu-74 (proton donor) is an active-site residue.

It belongs to the N(4)-acetylcytidine amidohydrolase family.

The catalysed reaction is N(4)-acetylcytidine + H2O = cytidine + acetate + H(+). It carries out the reaction N(4)-acetyl-2'-deoxycytidine + H2O = 2'-deoxycytidine + acetate + H(+). It catalyses the reaction N(4)-acetylcytosine + H2O = cytosine + acetate + H(+). Functionally, catalyzes the hydrolysis of N(4)-acetylcytidine (ac4C). In Haemophilus influenzae (strain PittEE), this protein is N(4)-acetylcytidine amidohydrolase.